Consider the following 936-residue polypeptide: Pre-rRNA-processing protein FHL1 (936 aa).

2 disordered regions span residues 1 to 90 and 139 to 169; these read MDGE…NGNL and DHSREVSSKEDINIEPVNPDEDEREKTQDNT. The span at 9–29 shows a compositional bias: polar residues; the sequence is ESSNHVGTSSPTTETQFTIDS. Ser44 bears the Phosphoserine mark. Residues 139–150 are compositionally biased toward basic and acidic residues; sequence DHSREVSSKEDI. Ser228 carries the post-translational modification Phosphoserine. Residues Thr230 and Thr247 each carry the phosphothreonine modification. Polar residues predominate over residues 243-257; the sequence is PPQNTVTENNSTDAE. Positions 243–270 are disordered; the sequence is PPQNTVTENNSTDAETTQRKLSEPIDAS. Ser264 carries the phosphoserine modification. Residues 300 to 357 form the FHA domain; sequence AIIGRRSENDFSHKVDVNLGPSKSISRRHAQIFYNFGTGRFELSIIGKNGAFVDDIFV. Over residues 384–395 the composition is skewed to basic and acidic residues; it reads EQERNDDSKSPE. Residues 384–442 are disordered; sequence EQERNDDSKSPENADIAESEINTRNLKKNEPKSKKKITTGAKPKKAQTKPAVKKEKKPP. Basic residues predominate over residues 416-430; the sequence is SKKKITTGAKPKKAQ. The fork-head DNA-binding region spans 460 to 552; the sequence is TKPTVSYSAM…ERQKKKQSEI (93 aa). A disordered region spans residues 718-936; that stretch reads AKAQHSKPIR…EVNVSLEEKL (219 aa). Composition is skewed to polar residues over residues 742–753 and 765–777; these read SQLSASASSHPN and DPSSLSRFFQPRQ. 2 stretches are compositionally biased toward low complexity: residues 779–795 and 815–853; these read ARATSSVAATSVPAAAS and ESGTSSSSSSSSESGSESDSGSDDGSASGSGDNSSTSSE. Positions 854–863 are enriched in acidic residues; it reads SESESDSGSE. The segment covering 864–911 has biased composition (basic and acidic residues); that stretch reads VDEKNNKNEKIDSESIKNNESKDDIPSKDENSSNDNREISKTDEEGHD.

It is found in the nucleus. Acts as a transcriptional regulator that recruits coactivator IFH1 to the promoters of ribosomal protein genes. Recruited to ribosomal gene promoters by RAP1. The polypeptide is Pre-rRNA-processing protein FHL1 (FHL1) (Saccharomyces cerevisiae (strain ATCC 204508 / S288c) (Baker's yeast)).